A 568-amino-acid polypeptide reads, in one-letter code: Phosphomethylpyrimidine synthase (568 aa).

Substrate is bound by residues Asn188, Met217, Tyr246, His282, 302-304 (SRG), 343-346 (DGLR), and Glu382. His386 is a Zn(2+) binding site. Tyr409 lines the substrate pocket. His450 serves as a coordination point for Zn(2+). [4Fe-4S] cluster-binding residues include Cys530, Cys533, and Cys538.

It belongs to the ThiC family. Homodimer. [4Fe-4S] cluster serves as cofactor.

The catalysed reaction is 5-amino-1-(5-phospho-beta-D-ribosyl)imidazole + S-adenosyl-L-methionine = 4-amino-2-methyl-5-(phosphooxymethyl)pyrimidine + CO + 5'-deoxyadenosine + formate + L-methionine + 3 H(+). The protein operates within cofactor biosynthesis; thiamine diphosphate biosynthesis. Its function is as follows. Catalyzes the synthesis of the hydroxymethylpyrimidine phosphate (HMP-P) moiety of thiamine from aminoimidazole ribotide (AIR) in a radical S-adenosyl-L-methionine (SAM)-dependent reaction. The protein is Phosphomethylpyrimidine synthase of Idiomarina loihiensis (strain ATCC BAA-735 / DSM 15497 / L2-TR).